The chain runs to 492 residues: 2,3-bisphosphoglycerate-independent phosphoglycerate mutase (492 aa).

Asp11 and Ser61 together coordinate Mn(2+). Ser61 acts as the Phosphoserine intermediate in catalysis. Residues His118, 147 to 148 (RD), Arg178, Arg184, 248 to 251 (RNDR), and Lys320 contribute to the substrate site. Residues Asp386, His390, Asp427, His428, and His445 each contribute to the Mn(2+) site.

This sequence belongs to the BPG-independent phosphoglycerate mutase family. In terms of assembly, monomer. It depends on Mn(2+) as a cofactor.

The catalysed reaction is (2R)-2-phosphoglycerate = (2R)-3-phosphoglycerate. It functions in the pathway carbohydrate degradation; glycolysis; pyruvate from D-glyceraldehyde 3-phosphate: step 3/5. Catalyzes the interconversion of 2-phosphoglycerate and 3-phosphoglycerate. The chain is 2,3-bisphosphoglycerate-independent phosphoglycerate mutase from Campylobacter jejuni (strain RM1221).